The following is a 169-amino-acid chain: Succinate dehydrogenase cytochrome b560 subunit, mitochondrial (169 aa).

The N-terminal 29 residues, Met-1–Pro-29, are a transit peptide targeting the mitochondrion. Over Leu-30–Ser-62 the chain is Mitochondrial matrix. A helical transmembrane segment spans residues Leu-63–Leu-92. Topologically, residues Pro-93–Leu-112 are mitochondrial intermembrane. Residues Ile-113–Trp-137 traverse the membrane as a helical segment. Residue His-127 participates in heme b binding. Over Asp-138–Thr-144 the chain is Mitochondrial matrix. A helical transmembrane segment spans residues Ile-145–Leu-166. The Mitochondrial intermembrane segment spans residues Ala-167–Met-169.

This sequence belongs to the cytochrome b560 family. In terms of assembly, component of complex II composed of four subunits: the flavoprotein (FP) SDHA, iron-sulfur protein (IP) SDHB, and a cytochrome b560 composed of SDHC and SDHD. Heme b is required as a cofactor. Detected in heart muscle (at protein level).

It localises to the mitochondrion inner membrane. Its pathway is carbohydrate metabolism; tricarboxylic acid cycle. Membrane-anchoring subunit of succinate dehydrogenase (SDH) that is involved in complex II of the mitochondrial electron transport chain and is responsible for transferring electrons from succinate to ubiquinone (coenzyme Q). SDH also oxidizes malate to the non-canonical enol form of oxaloacetate, enol-oxaloacetate. Enol-oxaloacetate, which is a potent inhibitor of the succinate dehydrogenase activity, is further isomerized into keto-oxaloacetate. The chain is Succinate dehydrogenase cytochrome b560 subunit, mitochondrial (SDHC) from Sus scrofa (Pig).